A 61-amino-acid polypeptide reads, in one-letter code: 14-3-3-like protein (61 aa).

This sequence belongs to the 14-3-3 family.

This is 14-3-3-like protein from Zea mays (Maize).